The chain runs to 345 residues: Anthranilate phosphoribosyltransferase (345 aa).

Residues glycine 75, 78–79 (GD), serine 83, 85–88 (NIST), 103–111 (KHGNRAASS), and glycine 115 each bind 5-phospho-alpha-D-ribose 1-diphosphate. Position 75 (glycine 75) interacts with anthranilate. Serine 87 provides a ligand contact to Mg(2+). Asparagine 106 lines the anthranilate pocket. Arginine 161 lines the anthranilate pocket. 2 residues coordinate Mg(2+): aspartate 219 and glutamate 220.

The protein belongs to the anthranilate phosphoribosyltransferase family. In terms of assembly, homodimer. It depends on Mg(2+) as a cofactor.

The enzyme catalyses N-(5-phospho-beta-D-ribosyl)anthranilate + diphosphate = 5-phospho-alpha-D-ribose 1-diphosphate + anthranilate. It participates in amino-acid biosynthesis; L-tryptophan biosynthesis; L-tryptophan from chorismate: step 2/5. Its function is as follows. Catalyzes the transfer of the phosphoribosyl group of 5-phosphorylribose-1-pyrophosphate (PRPP) to anthranilate to yield N-(5'-phosphoribosyl)-anthranilate (PRA). The chain is Anthranilate phosphoribosyltransferase from Nocardia farcinica (strain IFM 10152).